Reading from the N-terminus, the 88-residue chain is uncharacterized protein (88 aa).

The N-terminal stretch at 1–22 is a signal peptide; the sequence is MLKASILFITISLTLMLENSYG. Intrachain disulfides connect cysteine 59–cysteine 73, cysteine 66–cysteine 77, and cysteine 72–cysteine 82.

It is found in the secreted. This is an uncharacterized protein from Schistosoma japonicum (Blood fluke).